A 349-amino-acid chain; its full sequence is S-adenosylmethionine:tRNA ribosyltransferase-isomerase (349 aa).

Belongs to the QueA family. In terms of assembly, monomer.

The protein resides in the cytoplasm. It catalyses the reaction 7-aminomethyl-7-carbaguanosine(34) in tRNA + S-adenosyl-L-methionine = epoxyqueuosine(34) in tRNA + adenine + L-methionine + 2 H(+). Its pathway is tRNA modification; tRNA-queuosine biosynthesis. Functionally, transfers and isomerizes the ribose moiety from AdoMet to the 7-aminomethyl group of 7-deazaguanine (preQ1-tRNA) to give epoxyqueuosine (oQ-tRNA). This chain is S-adenosylmethionine:tRNA ribosyltransferase-isomerase, found in Pseudomonas entomophila (strain L48).